Reading from the N-terminus, the 107-residue chain is Metallothionein-1 (107 aa).

Residues 1–2 (MD) constitute a propeptide that is removed on maturation.

This sequence belongs to the metallothionein superfamily. Type 7 family.

Functionally, the metallothioneins are involved in the cellular sequestration of toxic metal ions. Binds 12 cadmium ions per molecule. The sequence is that of Metallothionein-1 from Tetrahymena pigmentosa.